Consider the following 269-residue polypeptide: tRNA pseudouridine synthase A (269 aa).

The Nucleophile role is filled by aspartate 55. Position 111 (tyrosine 111) interacts with substrate.

The protein belongs to the tRNA pseudouridine synthase TruA family.

It carries out the reaction uridine(38/39/40) in tRNA = pseudouridine(38/39/40) in tRNA. Functionally, formation of pseudouridine at positions 38, 39 and 40 in the anticodon stem and loop of transfer RNAs. The sequence is that of tRNA pseudouridine synthase A from Methanosarcina mazei (strain ATCC BAA-159 / DSM 3647 / Goe1 / Go1 / JCM 11833 / OCM 88) (Methanosarcina frisia).